The following is a 562-amino-acid chain: Long-chain-fatty-acid--CoA ligase (562 aa).

It belongs to the ATP-dependent AMP-binding enzyme family. Mg(2+) serves as cofactor.

The protein resides in the membrane. It carries out the reaction a long-chain fatty acid + ATP + CoA = a long-chain fatty acyl-CoA + AMP + diphosphate. The protein operates within lipid metabolism; fatty acid beta-oxidation. Catalyzes the esterification, concomitant with transport, of exogenous long-chain fatty acids into metabolically active CoA thioesters for subsequent degradation or incorporation into phospholipids. The polypeptide is Long-chain-fatty-acid--CoA ligase (fadD) (Haemophilus influenzae (strain ATCC 51907 / DSM 11121 / KW20 / Rd)).